The following is a 119-amino-acid chain: Large ribosomal subunit protein uL18 (119 aa).

It belongs to the universal ribosomal protein uL18 family. As to quaternary structure, part of the 50S ribosomal subunit; part of the 5S rRNA/L5/L18/L25 subcomplex. Contacts the 5S and 23S rRNAs.

In terms of biological role, this is one of the proteins that bind and probably mediate the attachment of the 5S RNA into the large ribosomal subunit, where it forms part of the central protuberance. The sequence is that of Large ribosomal subunit protein uL18 from Legionella pneumophila (strain Paris).